The chain runs to 423 residues: Progestin and adipoQ receptor-like protein 1 (423 aa).

Topologically, residues 1–201 (MDPDEVNQAL…KSIWSLHTET (201 aa)) are cytoplasmic. The disordered stretch occupies residues 54 to 140 (VVSPTNSDDE…DEDELEVDVK (87 aa)). A compositionally biased stretch (acidic residues) spans 60–69 (SDDEEGEFCS). The segment covering 104-114 (TVLRYRRKKGG) has biased composition (basic residues). Residues 202 to 222 (GNIWTHLIGCVAFFLLACWFL) traverse the membrane as a helical segment. The Extracellular segment spans residues 223-234 (TRPDNHIQFQEK). A helical membrane pass occupies residues 235–252 (VVFSFFFAGAVSVSDSRS). Residues 253 to 288 (PSTPSRVIRSTSSRYSANSTIWESRCSLSARLFQPK) are Cytoplasmic-facing. Residues 289–309 (ITYIAMVCVLGIGAIVVSLWD) traverse the membrane as a helical segment. Over 310-320 (KFSESKYRPVR) the chain is Extracellular. Residues 321 to 341 (AAVFVGMGCSGVIPTIHYIIT) traverse the membrane as a helical segment. Residues 342 to 351 (DGVHSLFADN) lie on the Cytoplasmic side of the membrane. A helical transmembrane segment spans residues 352–372 (SFHWLLLMAFLYLLGAALYAT). Residues 373-392 (RTPERFFPGKCDIWFQSHQL) are Extracellular-facing. The helical transmembrane segment at 393 to 413 (FHTCVVIAAFVHYYGISEMAF) threads the bilayer. Residues 414-423 (ARLNEQCPVR) are Cytoplasmic-facing.

This sequence belongs to the ADIPOR family.

It is found in the membrane. Functionally, probable receptor, which may be involved in metabolic pathways that regulate lipid metabolism such as fatty acid oxidation. In Caenorhabditis briggsae, this protein is Progestin and adipoQ receptor-like protein 1.